Here is a 428-residue protein sequence, read N- to C-terminus: Divergent protein kinase domain 1A (428 aa).

The Cytoplasmic portion of the chain corresponds to 1–27; the sequence is MARSLCPGAWLRKPYYLQARFSYVRMK. Residues 28–48 form a helical membrane-spanning segment; sequence YLFFSWLVVFVGSWIIYVQYS. Topologically, residues 49 to 428 are lumenal; it reads TYTELCRGKD…WKKISYTNDS (380 aa).

The protein belongs to the DIPK family. Among the many cysteines in the lumenal domain, most are probably involved in disulfide bonds.

The protein resides in the endoplasmic reticulum membrane. The polypeptide is Divergent protein kinase domain 1A (Homo sapiens (Human)).